A 558-amino-acid polypeptide reads, in one-letter code: CTP synthase (558 aa).

The interval 1–271 is amidoligase domain; sequence MAARQQTKHL…DAYVVRRLGL (271 aa). A CTP-binding site is contributed by Ser18. Residue Ser18 coordinates UTP. Residues 19–24 and Asp76 each bind ATP; that span reads SLGKGL. Mg(2+)-binding residues include Asp76 and Glu145. CTP is bound by residues 152 to 154, 192 to 197, and Lys228; these read DIE and KTKPTQ. Residues 192-197 and Lys228 each bind UTP; that span reads KTKPTQ. In terms of domain architecture, Glutamine amidotransferase type-1 spans 296-545; that stretch reads TIALVGKYVD…IRAALLHRCP (250 aa). Residue Gly359 coordinates L-glutamine. The active-site Nucleophile; for glutamine hydrolysis is Cys386. Residues 387 to 390, Glu410, and Arg471 contribute to the L-glutamine site; that span reads LGLQ. Catalysis depends on residues His518 and Glu520.

This sequence belongs to the CTP synthase family. In terms of assembly, homotetramer.

The enzyme catalyses UTP + L-glutamine + ATP + H2O = CTP + L-glutamate + ADP + phosphate + 2 H(+). The catalysed reaction is L-glutamine + H2O = L-glutamate + NH4(+). It catalyses the reaction UTP + NH4(+) + ATP = CTP + ADP + phosphate + 2 H(+). It participates in pyrimidine metabolism; CTP biosynthesis via de novo pathway; CTP from UDP: step 2/2. Allosterically activated by GTP, when glutamine is the substrate; GTP has no effect on the reaction when ammonia is the substrate. The allosteric effector GTP functions by stabilizing the protein conformation that binds the tetrahedral intermediate(s) formed during glutamine hydrolysis. Inhibited by the product CTP, via allosteric rather than competitive inhibition. Its function is as follows. Catalyzes the ATP-dependent amination of UTP to CTP with either L-glutamine or ammonia as the source of nitrogen. Regulates intracellular CTP levels through interactions with the four ribonucleotide triphosphates. The chain is CTP synthase from Acidothermus cellulolyticus (strain ATCC 43068 / DSM 8971 / 11B).